We begin with the raw amino-acid sequence, 130 residues long: Small ribosomal subunit protein uS11 (130 aa).

This sequence belongs to the universal ribosomal protein uS11 family. In terms of assembly, part of the 30S ribosomal subunit. Interacts with proteins S7 and S18. Binds to IF-3.

Functionally, located on the platform of the 30S subunit, it bridges several disparate RNA helices of the 16S rRNA. Forms part of the Shine-Dalgarno cleft in the 70S ribosome. This is Small ribosomal subunit protein uS11 from Shewanella amazonensis (strain ATCC BAA-1098 / SB2B).